A 272-amino-acid chain; its full sequence is MGSATVLDSILEGVRADVAAREAVVSLAEVKARAERAPAPLDVMAALRAPGIAVIAEVKRASPSRGELASIADPAELASAYESGGARAISVLTEQRRFNGSLDDLDAVRAAVSIPVLRKDFIVRPYQIHEARAHGADLLLLIVAALEQPALESLLERTESLGMTALVEVHTEEEADRALQAGASLIGVNARNLKTLEVDRDCFARIAPGLPTNVIKIAESGVRGTADLLAYAGAGADGVLVGEGLVTSGDPRSAVADLVTAGTHPSCPKPAR.

The protein belongs to the TrpC family.

It catalyses the reaction 1-(2-carboxyphenylamino)-1-deoxy-D-ribulose 5-phosphate + H(+) = (1S,2R)-1-C-(indol-3-yl)glycerol 3-phosphate + CO2 + H2O. It participates in amino-acid biosynthesis; L-tryptophan biosynthesis; L-tryptophan from chorismate: step 4/5. This Mycolicibacterium gilvum (strain PYR-GCK) (Mycobacterium gilvum (strain PYR-GCK)) protein is Indole-3-glycerol phosphate synthase.